Consider the following 261-residue polypeptide: Thiamine thiazole synthase (261 aa).

Residues Ser-40, 59 to 60 (ER), Gly-67, Val-133, and 159 to 161 (HID) each bind NAD(+). Fe cation is bound by residues Asp-161 and His-176. NAD(+) is bound by residues Ser-179 and Met-226. A glycine-binding site is contributed by Arg-236.

Belongs to the THI4 family. In terms of assembly, homooctamer; tetramer of dimers. The cofactor is Fe(2+).

It carries out the reaction hydrogen sulfide + glycine + NAD(+) = ADP-5-ethyl-4-methylthiazole-2-carboxylate + nicotinamide + 3 H2O + H(+). The protein operates within cofactor biosynthesis; thiamine diphosphate biosynthesis. Functionally, involved in the biosynthesis of the thiazole moiety of thiamine. Catalyzes the conversion of NAD and glycine to adenosine diphosphate 5-(2-hydroxyethyl)-4-methylthiazole-2-carboxylate (ADT), an adenylated thiazole intermediate, using free sulfide as a source of sulfur. This Methanococcus maripaludis (strain C6 / ATCC BAA-1332) protein is Thiamine thiazole synthase.